A 437-amino-acid chain; its full sequence is Ribosomal protein uS12 methylthiotransferase RimO (437 aa).

An MTTase N-terminal domain is found at 4–114 (PRVSFVSLGC…VMSAVHEAVP (111 aa)). [4Fe-4S] cluster contacts are provided by Cys-13, Cys-49, Cys-78, Cys-145, Cys-149, and Cys-152. Residues 131–369 (LTPRHYAYLK…MAKQQQISTN (239 aa)) enclose the Radical SAM core domain. The 66-residue stretch at 372–437 (KKKVGKRLPV…DAYDLHGIAV (66 aa)) folds into the TRAM domain.

This sequence belongs to the methylthiotransferase family. RimO subfamily. [4Fe-4S] cluster serves as cofactor.

Its subcellular location is the cytoplasm. The catalysed reaction is L-aspartate(89)-[ribosomal protein uS12]-hydrogen + (sulfur carrier)-SH + AH2 + 2 S-adenosyl-L-methionine = 3-methylsulfanyl-L-aspartate(89)-[ribosomal protein uS12]-hydrogen + (sulfur carrier)-H + 5'-deoxyadenosine + L-methionine + A + S-adenosyl-L-homocysteine + 2 H(+). Functionally, catalyzes the methylthiolation of an aspartic acid residue of ribosomal protein uS12. The chain is Ribosomal protein uS12 methylthiotransferase RimO from Brucella anthropi (strain ATCC 49188 / DSM 6882 / CCUG 24695 / JCM 21032 / LMG 3331 / NBRC 15819 / NCTC 12168 / Alc 37) (Ochrobactrum anthropi).